The following is a 228-amino-acid chain: UPF0173 metal-dependent hydrolase BcerKBAB4_4442 (228 aa).

It belongs to the UPF0173 family.

The sequence is that of UPF0173 metal-dependent hydrolase BcerKBAB4_4442 from Bacillus mycoides (strain KBAB4) (Bacillus weihenstephanensis).